A 224-amino-acid chain; its full sequence is PKHD-type hydroxylase Sbal_3634 (224 aa).

Residues 78–176 form the Fe2OG dioxygenase domain; sequence QFYPPLFNRY…RTAAFMWLQS (99 aa). Fe cation-binding residues include histidine 96, aspartate 98, and histidine 157. Residue arginine 167 participates in 2-oxoglutarate binding.

It depends on Fe(2+) as a cofactor. The cofactor is L-ascorbate.

This is PKHD-type hydroxylase Sbal_3634 from Shewanella baltica (strain OS155 / ATCC BAA-1091).